The primary structure comprises 360 residues: N-acetylmuramoyl-L-alanine amidase CwlL (360 aa).

The first 39 residues, 1–39 (MVKVVKNFVKVNQYTRPGLKLAGVKGIVMHYTATPGASA), serve as a signal peptide directing secretion. Residues 40-154 (LNERDYFNGT…DVTNKICPAP (115 aa)) form the N-acetylmuramoyl-L-alanine amidase domain. A run of 4 repeats spans residues 166–191 (RKKVDSLLGNKTVSKTTSSTSQSSKS), 196–259 (LKKG…EKAL), 265–289 (KKKKPSSNGKKTSYPLPSGIYKVKS), and 291–355 (LMKG…KAKL). 2 2 X approximate repeats regions span residues 166 to 289 (RKKV…KVKS) and 196 to 355 (LKKG…KAKL).

This sequence belongs to the N-acetylmuramoyl-L-alanine amidase 2 family.

The protein resides in the secreted. The enzyme catalyses Hydrolyzes the link between N-acetylmuramoyl residues and L-amino acid residues in certain cell-wall glycopeptides.. The protein is N-acetylmuramoyl-L-alanine amidase CwlL (cwlL) of Bacillus licheniformis.